Consider the following 315-residue polypeptide: Gamma-hemolysin component C (315 aa).

Positions 1–29 are cleaved as a signal peptide; sequence MLKNKILATTLSVSLLAPLANPLLENAKA.

Belongs to the aerolysin family. Toxicity requires sequential binding and synergistic association of a class S and a class F component which form heterooligomeric complexes. HlgC (class S) associates with HlgB (class F) thus forming an CB toxin.

Toxin that seems to act by forming pores in the membrane of the cell. Has a hemolytic and a leucotoxic activity. The protein is Gamma-hemolysin component C (hlgC) of Staphylococcus aureus (strain MSSA476).